The following is a 210-amino-acid chain: Large ribosomal subunit protein bL25 (210 aa).

The interval 191–210 (KPAPKAAETDEDGEEAASEE) is disordered. A compositionally biased stretch (acidic residues) spans 199–210 (TDEDGEEAASEE).

This sequence belongs to the bacterial ribosomal protein bL25 family. CTC subfamily. As to quaternary structure, part of the 50S ribosomal subunit; part of the 5S rRNA/L5/L18/L25 subcomplex. Contacts the 5S rRNA. Binds to the 5S rRNA independently of L5 and L18.

This is one of the proteins that binds to the 5S RNA in the ribosome where it forms part of the central protuberance. This is Large ribosomal subunit protein bL25 from Alteromonas mediterranea (strain DSM 17117 / CIP 110805 / LMG 28347 / Deep ecotype).